The following is a 465-amino-acid chain: ATP-dependent protease ATPase subunit HslU (465 aa).

Residues valine 18, 60-65 (GVGKTE), aspartate 277, glutamate 342, and arginine 414 each bind ATP.

The protein belongs to the ClpX chaperone family. HslU subfamily. In terms of assembly, a double ring-shaped homohexamer of HslV is capped on each side by a ring-shaped HslU homohexamer. The assembly of the HslU/HslV complex is dependent on binding of ATP.

It localises to the cytoplasm. In terms of biological role, ATPase subunit of a proteasome-like degradation complex; this subunit has chaperone activity. The binding of ATP and its subsequent hydrolysis by HslU are essential for unfolding of protein substrates subsequently hydrolyzed by HslV. HslU recognizes the N-terminal part of its protein substrates and unfolds these before they are guided to HslV for hydrolysis. This is ATP-dependent protease ATPase subunit HslU from Caldicellulosiruptor saccharolyticus (strain ATCC 43494 / DSM 8903 / Tp8T 6331).